We begin with the raw amino-acid sequence, 302 residues long: Fluoroacetate dehalogenase (302 aa).

In terms of domain architecture, AB hydrolase-1 spans 32–270 (PPLLLLHGFP…LDVWRKWASD (239 aa)). D110 serves as the catalytic Nucleophile. Residues R111, R114, H155, W156, and Y219 each contribute to the fluoroacetate site. The active-site Proton acceptor is H280.

The protein belongs to the AB hydrolase superfamily. Epoxide hydrolase family. In terms of assembly, homodimer.

The enzyme catalyses a haloacetate + H2O = a halide anion + glycolate + H(+). The catalysed reaction is fluoroacetate + H2O = fluoride + glycolate + H(+). It carries out the reaction chloroacetate + H2O = glycolate + chloride + H(+). In terms of biological role, catalyzes the hydrolytic defluorination of fluoroacetate to produce glycolate. Has lower activity towards chloroacetate and bromoacetate. This Rhodopseudomonas palustris (strain ATCC BAA-98 / CGA009) protein is Fluoroacetate dehalogenase.